The chain runs to 228 residues: Cell surface Cu-only superoxide dismutase 5 (228 aa).

The signal sequence occupies residues 1–15; the sequence is MKYLSIFLLATFALA. An N-linked (GlcNAc...) asparagine glycan is attached at N53. Cu cation-binding residues include H75 and H77. N-linked (GlcNAc...) asparagine glycosylation occurs at N86. A disulfide bond links C87 and C162. Position 93 (H93) interacts with Cu cation. A glycan (N-linked (GlcNAc...) asparagine) is linked at N98. H153 serves as a coordination point for Cu cation. N156, N164, N176, N181, and N192 each carry an N-linked (GlcNAc...) asparagine glycan. Residues 176–201 show a composition bias toward low complexity; it reads NTTMSNSSSSSSQSAVNTSSSMASTA. Residues 176–204 form a disordered region; that stretch reads NTTMSNSSSSSSQSAVNTSSSMASTAPQG. N205 carries the GPI-anchor amidated asparagine lipid modification. Positions 206–228 are cleaved as a propeptide — removed in mature form; that stretch reads GAERAVVNGLLAAGVVGVIAALI.

The protein belongs to the Cu-Zn superoxide dismutase family. In terms of assembly, monomer. Requires Cu cation as cofactor. Post-translationally, the GPI-anchor is attached to the protein in the endoplasmic reticulum and serves to target the protein to the cell surface. There, the glucosamine-inositol phospholipid moiety is cleaved off and the GPI-modified mannoprotein is covalently attached via its lipidless GPI glycan remnant to the 1,6-beta-glucan of the outer cell wall layer.

It is found in the secreted. The protein resides in the cell wall. Its subcellular location is the membrane. It catalyses the reaction 2 superoxide + 2 H(+) = H2O2 + O2. Secreted in a disulfide-oxidized form and apo-pools of secreted SOD5 can readily capture extracellular copper for rapid induction of enzyme activity. Its function is as follows. Superoxide dismutases serve to convert damaging superoxide radicals, a key form of ROS, to less damaging hydrogen peroxide that can be converted into water by catalase action. Degrades host-derived reactive oxygen species to escape innate immune surveillance. Involved in the occurrence of miconazole-tolerant persisters in biofilms. Persisters are cells that survive high doses of an antimicrobial agent. The unusual attributes of SOD5-like fungal proteins, including the absence of zinc and an open active site that readily captures extracellular copper, make these SODs well suited to meet challenges in zinc and copper availability at the host-pathogen interface. The protein is Cell surface Cu-only superoxide dismutase 5 (SOD5) of Candida albicans (strain SC5314 / ATCC MYA-2876) (Yeast).